Reading from the N-terminus, the 110-residue chain is Large ribosomal subunit protein uL22 (110 aa).

Belongs to the universal ribosomal protein uL22 family. In terms of assembly, part of the 50S ribosomal subunit.

Functionally, this protein binds specifically to 23S rRNA; its binding is stimulated by other ribosomal proteins, e.g. L4, L17, and L20. It is important during the early stages of 50S assembly. It makes multiple contacts with different domains of the 23S rRNA in the assembled 50S subunit and ribosome. The globular domain of the protein is located near the polypeptide exit tunnel on the outside of the subunit, while an extended beta-hairpin is found that lines the wall of the exit tunnel in the center of the 70S ribosome. The polypeptide is Large ribosomal subunit protein uL22 (Pseudoalteromonas atlantica (strain T6c / ATCC BAA-1087)).